The chain runs to 156 residues: ATP synthase subunit b (156 aa).

The helical transmembrane segment at 11-31 (AIAFILFVAFCMKYVWPPLMA) threads the bilayer.

The protein belongs to the ATPase B chain family. As to quaternary structure, F-type ATPases have 2 components, F(1) - the catalytic core - and F(0) - the membrane proton channel. F(1) has five subunits: alpha(3), beta(3), gamma(1), delta(1), epsilon(1). F(0) has three main subunits: a(1), b(2) and c(10-14). The alpha and beta chains form an alternating ring which encloses part of the gamma chain. F(1) is attached to F(0) by a central stalk formed by the gamma and epsilon chains, while a peripheral stalk is formed by the delta and b chains.

It localises to the cell inner membrane. Its function is as follows. F(1)F(0) ATP synthase produces ATP from ADP in the presence of a proton or sodium gradient. F-type ATPases consist of two structural domains, F(1) containing the extramembraneous catalytic core and F(0) containing the membrane proton channel, linked together by a central stalk and a peripheral stalk. During catalysis, ATP synthesis in the catalytic domain of F(1) is coupled via a rotary mechanism of the central stalk subunits to proton translocation. In terms of biological role, component of the F(0) channel, it forms part of the peripheral stalk, linking F(1) to F(0). In Erwinia tasmaniensis (strain DSM 17950 / CFBP 7177 / CIP 109463 / NCPPB 4357 / Et1/99), this protein is ATP synthase subunit b.